The primary structure comprises 314 residues: tRNA pseudouridine synthase B (314 aa).

Residue H43 coordinates substrate. Catalysis depends on D48, which acts as the Nucleophile. Substrate contacts are provided by Y76, Y179, and L200.

This sequence belongs to the pseudouridine synthase TruB family. Type 1 subfamily.

The catalysed reaction is uridine(55) in tRNA = pseudouridine(55) in tRNA. Its function is as follows. Responsible for synthesis of pseudouridine from uracil-55 in the psi GC loop of transfer RNAs. The sequence is that of tRNA pseudouridine synthase B from Salmonella typhi.